A 215-amino-acid chain; its full sequence is Probable phosphoglycerate mutase GpmB (215 aa).

Residues 8 to 15, 21 to 22, arginine 58, 82 to 85, and 151 to 152 contribute to the substrate site; these read RHGETLWN, QG, ELNM, and GM. Histidine 9 acts as the Tele-phosphohistidine intermediate in catalysis. Catalysis depends on glutamate 82, which acts as the Proton donor/acceptor.

This sequence belongs to the phosphoglycerate mutase family. GpmB subfamily.

The catalysed reaction is (2R)-2-phosphoglycerate = (2R)-3-phosphoglycerate. The protein operates within carbohydrate degradation; glycolysis; pyruvate from D-glyceraldehyde 3-phosphate: step 3/5. The chain is Probable phosphoglycerate mutase GpmB from Yersinia pseudotuberculosis serotype O:1b (strain IP 31758).